The following is a 112-amino-acid chain: Prostatic steroid-binding protein C2 (112 aa).

An N-terminal signal peptide occupies residues 1–20 (MRLSLCLLTILVVCCYEANG). Position 21 is a pyrrolidone carboxylic acid (Gln21).

This sequence belongs to the secretoglobin family. Lipophilin subfamily. As to quaternary structure, prostatein is composed of three different peptides called C1, C2 and C3. These form covalent C1:C3 (F) and C2:C3 (S) heterodimers whose noncovalent association forms tetrameric (C1:C3/C3:C2) prostatein molecules. In terms of processing, linked by three disulfide bonds to C3. The N-terminus is blocked.

It localises to the secreted. Part of prostatein which is the major secretory glycoprotein of ventral prostate gland. The polypeptide is Prostatic steroid-binding protein C2 (Psbpc2) (Rattus norvegicus (Rat)).